The primary structure comprises 642 residues: Sodium- and chloride-dependent neutral and basic amino acid transporter B(0+) (642 aa).

At 1–44 (MDKLKCPSFFKCREKEKVSASSENFHVGENDENQDRGNWSKKSD) the chain is on the cytoplasmic side. 3 helical membrane-spanning segments follow: residues 45–65 (YLLS…FPYL), 72–92 (GAFL…LFFL), and 110–130 (ILPL…FVTI). Topologically, residues 131-234 (YYNVIIAYSL…RSSGMNETGV (104 aa)) are extracellular. Residues Asn155, Asn163, Asn174, Asn189, Asn197, Asn202, and Asn230 are each glycosylated (N-linked (GlcNAc...) asparagine). 2 helical membrane-spanning segments follow: residues 235-255 (IVWY…AALF) and 261-281 (SGKV…ILLV). N-linked (GlcNAc...) asparagine glycosylation occurs at Asn302. 7 helical membrane passes run 315–335 (AATQ…ALSS), 348–368 (IVVC…IFSI), 399–419 (LAQL…LLTL), 450–477 (ITLG…VHLI), 480–500 (FCAG…IIWI), 528–548 (CWFV…LVQF), and 563–583 (VALG…MAII). Residues 584-642 (KIIQAKGNIFQRLISCCRPASNWGPYLEQHRGERYKDMVDPKKEADHEIPTVSGSRKPE) lie on the Cytoplasmic side of the membrane. Basic and acidic residues predominate over residues 622–632 (VDPKKEADHEI). Residues 622–642 (VDPKKEADHEIPTVSGSRKPE) form a disordered region.

Belongs to the sodium:neurotransmitter symporter (SNF) (TC 2.A.22) family. SLC6A14 subfamily. Levels are highest in adult and fetal lung, in trachea and salivary gland. Lower levels detected in mammary gland, stomach and pituitary gland, and very low levels in colon, uterus, prostate and testis.

The protein localises to the membrane. Its subcellular location is the apical cell membrane. It carries out the reaction glycine(out) + chloride(out) + 2 Na(+)(out) = glycine(in) + chloride(in) + 2 Na(+)(in). It catalyses the reaction L-leucine(out) + chloride(out) + 2 Na(+)(out) = L-leucine(in) + chloride(in) + 2 Na(+)(in). The enzyme catalyses L-glutamine(out) + chloride(out) + 2 Na(+)(out) = L-glutamine(in) + chloride(in) + 2 Na(+)(in). The catalysed reaction is L-arginine(out) + chloride(out) + 2 Na(+)(out) = L-arginine(in) + chloride(in) + 2 Na(+)(in). It carries out the reaction (R)-carnitine(out) + chloride(out) + 2 Na(+)(out) = (R)-carnitine(in) + chloride(in) + 2 Na(+)(in). It catalyses the reaction O-butanoyl-(R)-carnitine(out) + chloride(out) + 2 Na(+)(out) = O-butanoyl-(R)-carnitine(in) + chloride(in) + 2 Na(+)(in). The enzyme catalyses O-propanoyl-(R)-carnitine(out) + chloride(out) + 2 Na(+)(out) = O-propanoyl-(R)-carnitine(in) + chloride(in) + 2 Na(+)(in). The catalysed reaction is L-isoleucine(out) + chloride(out) + 2 Na(+)(out) = L-isoleucine(in) + chloride(in) + 2 Na(+)(in). It carries out the reaction L-methionine(out) + chloride(out) + 2 Na(+)(out) = L-methionine(in) + chloride(in) + 2 Na(+)(in). It catalyses the reaction L-valine(out) + chloride(out) + 2 Na(+)(out) = L-valine(in) + chloride(in) + 2 Na(+)(in). The enzyme catalyses L-alanine(out) + chloride(out) + 2 Na(+)(out) = L-alanine(in) + chloride(in) + 2 Na(+)(in). The catalysed reaction is L-serine(out) + chloride(out) + 2 Na(+)(out) = L-serine(in) + chloride(in) + 2 Na(+)(in). It carries out the reaction L-cysteine(out) + chloride(out) + 2 Na(+)(out) = L-cysteine(in) + chloride(in) + 2 Na(+)(in). It catalyses the reaction L-asparagine(out) + chloride(out) + 2 Na(+)(out) = L-asparagine(in) + chloride(in) + 2 Na(+)(in). The enzyme catalyses L-threonine(out) + chloride(out) + 2 Na(+)(out) = L-threonine(in) + chloride(in) + 2 Na(+)(in). The catalysed reaction is L-phenylalanine(out) + chloride(out) + 2 Na(+)(out) = L-phenylalanine(in) + chloride(in) + 2 Na(+)(in). It carries out the reaction L-tryptophan(out) + chloride(out) + 2 Na(+)(out) = L-tryptophan(in) + chloride(in) + 2 Na(+)(in). It catalyses the reaction L-tyrosine(out) + chloride(out) + 2 Na(+)(out) = L-tyrosine(in) + chloride(in) + 2 Na(+)(in). The enzyme catalyses L-histidine(out) + chloride(out) + 2 Na(+)(out) = L-histidine(in) + chloride(in) + 2 Na(+)(in). The catalysed reaction is L-lysine(out) + chloride(out) + 2 Na(+)(out) = L-lysine(in) + chloride(in) + 2 Na(+)(in). It carries out the reaction beta-alanine(out) + chloride(out) + 2 Na(+)(out) = beta-alanine(in) + chloride(in) + 2 Na(+)(in). Functionally, amino acid transporter that plays an important role in the absorption of amino acids in the intestinal tract. Mediates the uptake of a broad range of neutral and cationic amino acids (with the exception of proline) in a Na(+)/Cl(-)-dependent manner. Transports non-alpha-amino acids such as beta-alanine with low affinity, and has a higher affinity for dipolar and cationic amino acids such as leucine and lysine. Can also transport carnitine, butirylcarnitine and propionylcarnitine coupled to the transmembrane gradients of Na(+) and Cl(-). This is Sodium- and chloride-dependent neutral and basic amino acid transporter B(0+) from Homo sapiens (Human).